The following is a 467-amino-acid chain: Citrate synthase, mitochondrial (467 aa).

Catalysis depends on residues His301 and His347.

The protein belongs to the citrate synthase family.

It is found in the mitochondrion matrix. It carries out the reaction oxaloacetate + acetyl-CoA + H2O = citrate + CoA + H(+). It participates in carbohydrate metabolism; tricarboxylic acid cycle; isocitrate from oxaloacetate: step 1/2. This chain is Citrate synthase, mitochondrial (CIT), found in Candida tropicalis (Yeast).